A 376-amino-acid polypeptide reads, in one-letter code: uncharacterized protein (376 aa).

Residues 1–280 (MPIPIIAHIA…RTPGFRRVVS (280 aa)) are Lumenal-facing. NADP(+)-binding residues include isoleucine 66, aspartate 115, arginine 178, lysine 233, valine 270, and threonine 272. The Lowers pKa of active site Tyr role is filled by lysine 233. A helical membrane pass occupies residues 281–301 (FGKVWGLFLYLLLWPFWWLLL). Over 302-376 (KGTIHGAQSF…KKKKIKKSKK (75 aa)) the chain is Cytoplasmic.

The protein belongs to the short-chain dehydrogenases/reductases (SDR) family.

The protein localises to the cytoplasm. It is found in the endoplasmic reticulum membrane. Functionally, may be involved in lipid metabolism. This is an uncharacterized protein from Schizosaccharomyces pombe (strain 972 / ATCC 24843) (Fission yeast).